Reading from the N-terminus, the 106-residue chain is Cytochrome c oxidase assembly protein COX16 homolog, mitochondrial (106 aa).

The Mitochondrial matrix segment spans residues Met-1 to Thr-15. The chain crosses the membrane as a helical span at residues Leu-16–Leu-33. Topologically, residues Arg-34 to Thr-106 are mitochondrial intermembrane. The disordered stretch occupies residues Ile-81 to Thr-106.

Belongs to the COX16 family. In terms of assembly, associates with the MITRAC complex. Interacts with MT-CO2/COX; specifically interacts with newly synthesized MT-CO2/COX. Interacts with SCO1, SCO2 and COA6.

The protein resides in the mitochondrion inner membrane. Its function is as follows. Required for the assembly of the mitochondrial respiratory chain complex IV (CIV), also known as cytochrome c oxidase. Promotes the insertion of copper into the active site of cytochrome c oxidase subunit II (MT-CO2/COX2). Interacts specifically with newly synthesized MT-CO2/COX and its copper center-forming metallochaperones SCO1, SCO2 and COA6. Probably facilitates MT-CO2/COX2 association with the MITRAC assembly intermediate containing MT-CO1/COX1, thereby participating in merging the MT-CO1/COX1 and MT-CO2/COX2 assembly lines. The sequence is that of Cytochrome c oxidase assembly protein COX16 homolog, mitochondrial from Mus musculus (Mouse).